The sequence spans 496 residues: MEDQKEALRKIITTLAVKNEEIQSFIYSLKQMLLNVEANSAKVQEDLEAEFQSLFSLLEELKEGMLMKIKQDRASRTYELQNQLAACTRALESSEELLETANQTLLATDSKDFPQAAKQIKDGVTMAPAFRLSLKAKVSDNMSHLMVDFAQERRMLQALTFLPVPSAPVIDLTESLVADNCVTLVWRMPDEDNKIDHFVLEYRRTNFEGPPRLKEDQPWMVIEGIRQTEYTLTGLKFDMKYMNFRVKACNKAVSGEFSEPVTLETPAFMFRLDASTSHQNLRVDDLSVEWDAMGGKVQDIKAREKDGKGRTASPVNSPARGTPSPKRMPSGRGGRDRFTAESYTVLGDTLIDGGEHYWEVRYEPDSKAFGVGVAYRSLGRFEQLGKTAASWCLHVNNWLQVSFTAKHANKAKMLDAPVPDCLGVHCDFHQGLLSFYNGRTKQLLHTFKAKFTQPLLPAFTVWCGSFHVTTGLQVPSSVRCLQKRGSATSSSNTSLT.

The stretch at 4-99 (QKEALRKIIT…ALESSEELLE (96 aa)) forms a coiled coil. The COS domain occupies 105 to 162 (LLATDSKDFPQAAKQIKDGVTMAPAFRLSLKAKVSDNMSHLMVDFAQERRMLQALTFL). In terms of domain architecture, Fibronectin type-III spans 164 to 268 (VPSAPVIDLT…EPVTLETPAF (105 aa)). The B30.2/SPRY domain occupies 268–477 (FMFRLDASTS…VTTGLQVPSS (210 aa)). The segment at 301–336 (KAREKDGKGRTASPVNSPARGTPSPKRMPSGRGGRD) is disordered. Omega-N-methylarginine is present on residues Arg-310 and Arg-320.

In terms of assembly, oligomerization is required for binding to microtubules.

It is found in the cytoplasm. Its subcellular location is the cytoskeleton. It localises to the microtubule organizing center. The protein resides in the centrosome. The protein localises to the nucleus. It is found in the cleavage furrow. Its function is as follows. May be involved in microtubule organization and stabilization. This chain is Fibronectin type III and SPRY domain-containing protein 1 (FSD1), found in Bos taurus (Bovine).